The primary structure comprises 370 residues: Aminomethyltransferase (370 aa).

Belongs to the GcvT family. In terms of assembly, the glycine cleavage system is composed of four proteins: P, T, L and H.

It catalyses the reaction N(6)-[(R)-S(8)-aminomethyldihydrolipoyl]-L-lysyl-[protein] + (6S)-5,6,7,8-tetrahydrofolate = N(6)-[(R)-dihydrolipoyl]-L-lysyl-[protein] + (6R)-5,10-methylene-5,6,7,8-tetrahydrofolate + NH4(+). In terms of biological role, the glycine cleavage system catalyzes the degradation of glycine. The protein is Aminomethyltransferase of Prochlorococcus marinus (strain AS9601).